A 535-amino-acid chain; its full sequence is Alpha-1,3-mannosyl-glycoprotein 4-beta-N-acetylglucosaminyltransferase A (535 aa).

Over Met-1 to Arg-4 the chain is Cytoplasmic. A helical; Signal-anchor for type II membrane protein transmembrane segment spans residues Asn-5–Trp-27. A coiled-coil region spans residues Gln-28–Asn-63. Residues Gln-28–Lys-535 lie on the Lumenal side of the membrane. Asn-77 and Asn-458 each carry an N-linked (GlcNAc...) asparagine glycan. Position 474 is a phosphoserine (Ser-474).

It belongs to the glycosyltransferase 54 family. A divalent metal cation serves as cofactor. In terms of processing, N-glycosylated.

The protein resides in the golgi apparatus membrane. It localises to the secreted. The enzyme catalyses N(4)-{beta-D-GlcNAc-(1-&gt;2)-alpha-D-Man-(1-&gt;3)-[beta-D-GlcNAc-(1-&gt;2)-alpha-D-Man-(1-&gt;6)]-beta-D-Man-(1-&gt;4)-beta-D-GlcNAc-(1-&gt;4)-beta-D-GlcNAc}-L-asparaginyl-[protein] + UDP-N-acetyl-alpha-D-glucosamine = N(4)-{beta-D-GlcNAc-(1-&gt;2)-[beta-D-GlcNAc-(1-&gt;4)]-alpha-D-Man-(1-&gt;3)-[beta-D-GlcNAc-(1-&gt;2)-alpha-D-Man-(1-&gt;6)]-beta-D-Man-(1-&gt;4)-beta-D-GlcNAc-(1-&gt;4)-beta-D-GlcNAc}-L-asparaginyl-[protein] + UDP + H(+). It catalyses the reaction an N(4)-{beta-D-GlcNAc-(1-&gt;2)-alpha-D-Man-(1-&gt;3)-[alpha-D-Man-(1-&gt;6)]-beta-D-Man-(1-&gt;4)-beta-D-GlcNAc-(1-&gt;4)-beta-D-GlcNAc}-L-asparaginyl-[protein] + UDP-N-acetyl-alpha-D-glucosamine = an N(4)-{beta-D-GlcNAc-(1-&gt;2)-[beta-D-GlcNAc-(1-&gt;4)]-alpha-D-Man-(1-&gt;3)-[alpha-D-Man-(1-&gt;6)]-beta-D-Man-(1-&gt;4)-beta-D-GlcNAc-(1-&gt;4)-beta-D-GlcNAc}-L-asparaginyl-[protein] + UDP + H(+). The catalysed reaction is an N(4)-{beta-D-GlcNAc-(1-&gt;2)-alpha-D-Man-(1-&gt;3)-[beta-D-GlcNAc-(1-&gt;2)-[beta-D-GlcNAc-(1-&gt;6)]-alpha-D-Man-(1-&gt;6)]-beta-D-Man-(1-&gt;4)-beta-D-GlcNAc-(1-&gt;4)-beta-D-GlcNAc}-L-asparaginyl-[protein] + UDP-N-acetyl-alpha-D-glucosamine = an N(4)-{beta-D-GlcNAc-(1-&gt;2)-[beta-D-GlcNAc-(1-&gt;4)]-alpha-D-Man-(1-&gt;3)-[beta-D-GlcNAc-(1-&gt;2)-[beta-D-GlcNAc-(1-&gt;6)]-alpha-D-Man-(1-&gt;6)]-beta-D-Man-(1-&gt;4)-beta-D-GlcNAc-(1-&gt;4)-beta-D-GlcNAc}-L-asparaginyl-[protein] + UDP + H(+). It carries out the reaction an N(4)-{beta-D-GlcNAc-(1-&gt;2)-alpha-D-Man-(1-&gt;3)-[beta-D-GlcNAc-(1-&gt;2)-alpha-D-Man-(1-&gt;6)]-beta-D-Man-(1-&gt;4)-beta-D-GlcNAc-(1-&gt;4)-[alpha-L-Fuc-(1-&gt;6)]-beta-D-GlcNAc}-L-asparaginyl-[protein] + UDP-N-acetyl-alpha-D-glucosamine = N(4)-{beta-D-GlcNAc-(1-&gt;2)-[beta-D-GlcNAc-(1-&gt;4)]-alpha-D-Man-(1-&gt;3)-[beta-D-GlcNAc-(1-&gt;2)-alpha-D-Man-(1-&gt;6)]-beta-D-Man-(1-&gt;4)-beta-D-GlcNAc-(1-&gt;4)-[alpha-L-Fuc-(1-&gt;6)]-beta-D-GlcNAc}-asparaginyl-[protein] + UDP + H(+). The enzyme catalyses an N(4)-{beta-D-GlcNAc-(1-&gt;2)-alpha-D-Man-(1-&gt;3)-[beta-D-Gal-(1-&gt;4)-beta-D-GlcNAc-(1-&gt;2)-alpha-D-Man-(1-&gt;6)]-beta-D-Man-(1-&gt;4)-beta-D-GlcNAc-(1-&gt;4)-beta-D-GlcNAc}-L-asparaginyl-[protein] + UDP-N-acetyl-alpha-D-glucosamine = an N(4)-{beta-D-GlcNAc-(1-&gt;2)-[beta-D-GlcNAc-(1-&gt;4)]-alpha-D-Man-(1-&gt;3)-[beta-D-Gal-(1-&gt;4)-beta-D-GlcNAc-(1-&gt;2)-alpha-D-Man-(1-&gt;6)]-beta-D-Man-(1-&gt;4)-beta-D-GlcNAc-(1-&gt;4)-beta-D-GlcNAc}-L-asparaginyl-[protein] + UDP + H(+). It catalyses the reaction N(4)-{beta-D-GlcNAc-(1-&gt;2)-alpha-D-Man-(1-&gt;3)-[alpha-D-Man-(1-&gt;3)-{alpha-D-Man-(1-&gt;6)}-alpha-D-Man-(1-&gt;6)]-beta-D-Man-(1-&gt;4)-beta-D-GlcNAc-(1-&gt;4)-beta-D-GlcNAc}-asparaginyl-[protein] + UDP-N-acetyl-alpha-D-glucosamine = N(4)-{beta-D-GlcNAc-(1-&gt;2)-[beta-D-GlcNAc-(1-&gt;4)]-alpha-D-Man-(1-&gt;3)-[alpha-D-Man-(1-&gt;3)-{alpha-D-Man-(1-&gt;6)}-alpha-D-Man-(1-&gt;6)]-beta-D-Man-(1-&gt;4)-beta-D-GlcNAc-(1-&gt;4)-beta-D-GlcNAc}-asparaginyl-[protein] + UDP + H(+). The catalysed reaction is N(4)-{beta-D-GlcNAc-(1-&gt;2)-alpha-D-Man-(1-&gt;3)-beta-D-Man-(1-&gt;4)-beta-D-GlcNAc-(1-&gt;4)-beta-D-GlcNAc}-asparaginyl-[protein] + UDP-N-acetyl-alpha-D-glucosamine = N(4)-{beta-D-GlcNAc-(1-&gt;2)-[beta-D-GlcNAc-(1-&gt;4)]-alpha-D-Man-(1-&gt;3)-beta-D-Man-(1-&gt;4)-beta-D-GlcNAc-(1-&gt;4)-beta-D-GlcNAc}-asparaginyl-[protein] + UDP + H(+). It participates in protein modification; protein glycosylation. With respect to regulation, inhibited by UDP. Its function is as follows. Glycosyltransferase that catalyze the transfer of GlcNAc from UDP-GlcNAc to the GlcNAcbeta1-2Manalpha1-3 arm of the core structure of N-linked glycans through a beta1-4 linkage and participates in the production of tri- and tetra-antennary N-linked sugar chains. Involved in glucose transport by mediating SLC2A2/GLUT2 glycosylation, thereby controlling cell-surface expression of SLC2A2 in pancreatic beta cells. In Macaca fascicularis (Crab-eating macaque), this protein is Alpha-1,3-mannosyl-glycoprotein 4-beta-N-acetylglucosaminyltransferase A.